A 66-amino-acid polypeptide reads, in one-letter code: Large ribosomal subunit protein bL35 (66 aa).

This sequence belongs to the bacterial ribosomal protein bL35 family.

In Brucella canis (strain ATCC 23365 / NCTC 10854 / RM-666), this protein is Large ribosomal subunit protein bL35.